Here is a 286-residue protein sequence, read N- to C-terminus: MAELQKLSSRLKSVKVTRKITKAMELVAASKIRRAKESFFSNKEYFQIIQDIFDNLASKTEQIFLKKQMKFDKENNTNSILYIVINSDLGLCGAYNSSIAKEIKKEIKSKDKLFLIGKKGLLFLGKFKTQITNLDKVKEISTNYKNIKKISEKILSMFKSGDYKSIKIVYTKYVNAFTYLPTIKHALPILKSEKNINEATFSNLEFEPDPITIFQKAIPLYFSSLLYSCVLESHVSEVSSRRIAMENATKNADELGDQLKIELNTIRQSKITQEITEIVAGSETEI.

The protein belongs to the ATPase gamma chain family. In terms of assembly, F-type ATPases have 2 components, CF(1) - the catalytic core - and CF(0) - the membrane proton channel. CF(1) has five subunits: alpha(3), beta(3), gamma(1), delta(1), epsilon(1). CF(0) has three main subunits: a, b and c.

The protein resides in the cell membrane. Its function is as follows. Produces ATP from ADP in the presence of a proton gradient across the membrane. The gamma chain is believed to be important in regulating ATPase activity and the flow of protons through the CF(0) complex. The sequence is that of ATP synthase gamma chain from Mycoplasma mobile (strain ATCC 43663 / 163K / NCTC 11711) (Mesomycoplasma mobile).